The sequence spans 151 residues: Transcriptional regulator SyrB (151 aa).

Residues 1–61 are disordered; the sequence is MADESNTGPV…RYSEQERNDK (61 aa). Over residues 33-48 the composition is skewed to low complexity; it reads PQKAAAEPAQPKAPAA. A compositionally biased stretch (basic and acidic residues) spans 52–61; that stretch reads RYSEQERNDK.

Belongs to the SyrB family.

Functionally, responsible for the repression of SyrM activity. In Rhizobium meliloti (strain 1021) (Ensifer meliloti), this protein is Transcriptional regulator SyrB (syrB).